Reading from the N-terminus, the 260-residue chain is ELL-associated factor 2 (260 aa).

The tract at residues leucine 17–serine 104 is necessary for interaction with ELL. A compositionally biased stretch (basic and acidic residues) spans glycine 116–glutamine 126. 2 disordered regions span residues glycine 116 to serine 154 and methionine 170 to phenylalanine 234. Phosphoserine occurs at positions 146, 151, and 154. The segment covering serine 174–aspartate 192 has biased composition (low complexity). The tract at residues aspartate 177–aspartate 260 is necessary for transactivation activity. The segment covering proline 225–phenylalanine 234 has biased composition (basic and acidic residues). Positions arginine 246–aspartate 260 are necessary for interaction with TCEA1 and transactivation activity.

It belongs to the EAF family. Isoform 1 and isoform 2 interact with TCEA1. Component of the super elongation complex (SEC), at least composed of EAF1, EAF2, CDK9, MLLT3/AF9, AFF (AFF1 or AFF4), the P-TEFb complex and ELL (ELL, ELL2 or ELL3). Interacts with ELL and ELL2. Expressed in heart, brain, placenta, lung, skeletal muscle, kidney, pancreas, spleen, prostate, testis, small intestine, colon, adrenal, bone marrow, lymph node, spinal gland, stomach, thyroid, trachea, thymus, liver and leukocytes.

It is found in the nucleus speckle. Its function is as follows. Acts as a transcriptional transactivator of TCEA1 elongation activity. Acts as a transcriptional transactivator of ELL and ELL2 elongation activities. Potent inducer of apoptosis in prostatic and non-prostatic cell lines. Inhibits prostate tumor growth in vivo. This chain is ELL-associated factor 2 (EAF2), found in Homo sapiens (Human).